We begin with the raw amino-acid sequence, 170 residues long: ATP synthase subunit b (170 aa).

Residues Phe-30–Pro-50 traverse the membrane as a helical segment.

This sequence belongs to the ATPase B chain family. In terms of assembly, F-type ATPases have 2 components, F(1) - the catalytic core - and F(0) - the membrane proton channel. F(1) has five subunits: alpha(3), beta(3), gamma(1), delta(1), epsilon(1). F(0) has three main subunits: a(1), b(2) and c(10-14). The alpha and beta chains form an alternating ring which encloses part of the gamma chain. F(1) is attached to F(0) by a central stalk formed by the gamma and epsilon chains, while a peripheral stalk is formed by the delta and b chains.

It localises to the cell membrane. Its function is as follows. F(1)F(0) ATP synthase produces ATP from ADP in the presence of a proton or sodium gradient. F-type ATPases consist of two structural domains, F(1) containing the extramembraneous catalytic core and F(0) containing the membrane proton channel, linked together by a central stalk and a peripheral stalk. During catalysis, ATP synthesis in the catalytic domain of F(1) is coupled via a rotary mechanism of the central stalk subunits to proton translocation. Component of the F(0) channel, it forms part of the peripheral stalk, linking F(1) to F(0). In Mycobacterium marinum (strain ATCC BAA-535 / M), this protein is ATP synthase subunit b.